The primary structure comprises 113 residues: Tubulin-folding cofactor A (113 aa).

Residues leucine 83–alanine 113 form a disordered region. A compositionally biased stretch (basic and acidic residues) spans lysine 89–alanine 113.

The protein belongs to the TBCA family. As to quaternary structure, monomer. Supercomplex made of cofactors A to E. Cofactors A and D function by capturing and stabilizing tubulin in a quasi-native conformation. Cofactor E binds to the cofactor D-tubulin complex; interaction with cofactor C then causes the release of tubulin polypeptides that are committed to the native state. Interacts with TUBB9. Expressed in leaves, roots, flowers and stems.

Functionally, tubulin-folding protein involved in the control of the alpha-/beta-tubulin monomer balance. Functions as a reservoir of bound and non-toxic beta-tubulin. Required in the developing embryo. The sequence is that of Tubulin-folding cofactor A (TFCA) from Arabidopsis thaliana (Mouse-ear cress).